Reading from the N-terminus, the 342-residue chain is L-threonine 3-dehydrogenase (342 aa).

Residue Cys-38 participates in Zn(2+) binding. Active-site charge relay system residues include Thr-40 and His-43. 6 residues coordinate Zn(2+): His-63, Glu-64, Cys-93, Cys-96, Cys-99, and Cys-107. Residues Ile-175, Asp-195, Arg-200, 262–264, and 286–287 contribute to the NAD(+) site; these read LGI and IY.

It belongs to the zinc-containing alcohol dehydrogenase family. As to quaternary structure, homotetramer. The cofactor is Zn(2+).

It is found in the cytoplasm. It catalyses the reaction L-threonine + NAD(+) = (2S)-2-amino-3-oxobutanoate + NADH + H(+). Its pathway is amino-acid degradation; L-threonine degradation via oxydo-reductase pathway; glycine from L-threonine: step 1/2. Functionally, catalyzes the NAD(+)-dependent oxidation of L-threonine to 2-amino-3-ketobutyrate. The chain is L-threonine 3-dehydrogenase from Burkholderia ambifaria (strain MC40-6).